The sequence spans 151 residues: Nucleoside diphosphate kinase (151 aa).

ATP is bound by residues K11, F59, R87, T93, R104, and N114. Catalysis depends on H117, which acts as the Pros-phosphohistidine intermediate.

Belongs to the NDK family. As to quaternary structure, homohexamer. The cofactor is Mg(2+).

It carries out the reaction a 2'-deoxyribonucleoside 5'-diphosphate + ATP = a 2'-deoxyribonucleoside 5'-triphosphate + ADP. The catalysed reaction is a ribonucleoside 5'-diphosphate + ATP = a ribonucleoside 5'-triphosphate + ADP. Its function is as follows. Major role in the synthesis of nucleoside triphosphates other than ATP. The ATP gamma phosphate is transferred to the NDP beta phosphate via a ping-pong mechanism, using a phosphorylated active-site intermediate. In Ginglymostoma cirratum (Nurse shark), this protein is Nucleoside diphosphate kinase.